Reading from the N-terminus, the 461-residue chain is Ribosomal protein uS12 methylthiotransferase RimO (461 aa).

The region spanning 9–124 (PRIGMVSLGC…VMDAVHLNLP (116 aa)) is the MTTase N-terminal domain. Residues Cys-18, Cys-54, Cys-83, Cys-159, Cys-163, and Cys-166 each contribute to the [4Fe-4S] cluster site. Residues 145–387 (LTPRHYAYLK…AVAEAVSSQK (243 aa)) enclose the Radical SAM core domain. One can recognise a TRAM domain in the interval 389–461 (QQRVGATMQV…QGHDLIAVPV (73 aa)).

Belongs to the methylthiotransferase family. RimO subfamily. The cofactor is [4Fe-4S] cluster.

The protein resides in the cytoplasm. It carries out the reaction L-aspartate(89)-[ribosomal protein uS12]-hydrogen + (sulfur carrier)-SH + AH2 + 2 S-adenosyl-L-methionine = 3-methylsulfanyl-L-aspartate(89)-[ribosomal protein uS12]-hydrogen + (sulfur carrier)-H + 5'-deoxyadenosine + L-methionine + A + S-adenosyl-L-homocysteine + 2 H(+). Functionally, catalyzes the methylthiolation of an aspartic acid residue of ribosomal protein uS12. The chain is Ribosomal protein uS12 methylthiotransferase RimO from Polaromonas naphthalenivorans (strain CJ2).